A 415-amino-acid chain; its full sequence is Gamma-glutamyl phosphate reductase 1 (415 aa).

It belongs to the gamma-glutamyl phosphate reductase family.

It localises to the cytoplasm. The enzyme catalyses L-glutamate 5-semialdehyde + phosphate + NADP(+) = L-glutamyl 5-phosphate + NADPH + H(+). It functions in the pathway amino-acid biosynthesis; L-proline biosynthesis; L-glutamate 5-semialdehyde from L-glutamate: step 2/2. In terms of biological role, catalyzes the NADPH-dependent reduction of L-glutamate 5-phosphate into L-glutamate 5-semialdehyde and phosphate. The product spontaneously undergoes cyclization to form 1-pyrroline-5-carboxylate. The sequence is that of Gamma-glutamyl phosphate reductase 1 from Bacillus licheniformis (strain ATCC 14580 / DSM 13 / JCM 2505 / CCUG 7422 / NBRC 12200 / NCIMB 9375 / NCTC 10341 / NRRL NRS-1264 / Gibson 46).